We begin with the raw amino-acid sequence, 360 residues long: Arginase, non-hepatic 2 (360 aa).

Mn(2+) is bound by residues His122, Asp145, His147, and Asp149. Residues 147–151, 158–160, and Asp204 each bind substrate; these read HADIN and SGN. Residues Asp253 and Asp255 each coordinate Mn(2+). The substrate site is built by Thr267 and Glu298.

The protein belongs to the arginase family. Homotrimer. Requires Mn(2+) as cofactor. As to expression, expressed at differing tadpole stages in tail, intestine, hindlimb and trunk region. Strongest in tadpole tail.

The enzyme catalyses L-arginine + H2O = urea + L-ornithine. It functions in the pathway nitrogen metabolism; urea cycle; L-ornithine and urea from L-arginine: step 1/1. As well as its role in the urea cycle, may be involved in tissue remodeling. The protein is Arginase, non-hepatic 2 (arg2-b) of Xenopus laevis (African clawed frog).